The sequence spans 315 residues: MATDNTKRKAAIIGSGNIGTDLMIKIMRRSRHLDVAAMVGIDPASDGLARAAKLGVATTHEGVQGLTRLSVFDEIDFVFDATSAGAHVKNDAFLRTLKPGIRVIDLTPAAIGPYCVPVVNLDAHLDAPNVNMVTCGGQATIPMVAAVSRVAKVHYAEIVASISSRSAGPGTRANIDEFTETTSKAIEAVGGAGKGKAIIVLNPAEPPLMMRDTVYVLSEAADRAQIEASVERMAAAVQAYVPGYRLKQSVQFDDIPANAPLHIPGLGRFSGLKTSVFIEVEGAAHYLPAYAGNLDIMTSAALATAERMAASLVNA.

15 to 18 (SGNI) lines the NAD(+) pocket. Cys135 functions as the Acyl-thioester intermediate in the catalytic mechanism. Residues 166-174 (SAGPGTRAN) and Asn293 contribute to the NAD(+) site.

This sequence belongs to the acetaldehyde dehydrogenase family.

The enzyme catalyses acetaldehyde + NAD(+) + CoA = acetyl-CoA + NADH + H(+). This Paraburkholderia phymatum (strain DSM 17167 / CIP 108236 / LMG 21445 / STM815) (Burkholderia phymatum) protein is Acetaldehyde dehydrogenase 2.